Consider the following 216-residue polypeptide: 3-isopropylmalate dehydratase small subunit (216 aa).

It belongs to the LeuD family. LeuD type 1 subfamily. As to quaternary structure, heterodimer of LeuC and LeuD.

It carries out the reaction (2R,3S)-3-isopropylmalate = (2S)-2-isopropylmalate. It participates in amino-acid biosynthesis; L-leucine biosynthesis; L-leucine from 3-methyl-2-oxobutanoate: step 2/4. Functionally, catalyzes the isomerization between 2-isopropylmalate and 3-isopropylmalate, via the formation of 2-isopropylmaleate. This Burkholderia thailandensis (strain ATCC 700388 / DSM 13276 / CCUG 48851 / CIP 106301 / E264) protein is 3-isopropylmalate dehydratase small subunit.